The sequence spans 118 residues: MLGVYLPIIVLVAVAVIFGLASLTFSSLIGQKKPSAVKLAPYECGCEPVGSARERFSVKFYIIAMLFILFDIEAVFMYPWSVLFKRLGIFGVVEMGLFIVILFVGYIYVWKKGALEWE.

The next 3 helical transmembrane spans lie at 1–21 (MLGVYLPIIVLVAVAVIFGLA), 60–80 (FYIIAMLFILFDIEAVFMYPW), and 87–107 (LGIFGVVEMGLFIVILFVGYI).

It belongs to the complex I subunit 3 family. In terms of assembly, NDH-1 is composed of 14 different subunits. Subunits NuoA, H, J, K, L, M, N constitute the membrane sector of the complex.

Its subcellular location is the cell inner membrane. The catalysed reaction is a quinone + NADH + 5 H(+)(in) = a quinol + NAD(+) + 4 H(+)(out). In terms of biological role, NDH-1 shuttles electrons from NADH, via FMN and iron-sulfur (Fe-S) centers, to quinones in the respiratory chain. The immediate electron acceptor for the enzyme in this species is believed to be ubiquinone. Couples the redox reaction to proton translocation (for every two electrons transferred, four hydrogen ions are translocated across the cytoplasmic membrane), and thus conserves the redox energy in a proton gradient. In Geobacter sulfurreducens (strain ATCC 51573 / DSM 12127 / PCA), this protein is NADH-quinone oxidoreductase subunit A 1.